The chain runs to 185 residues: Ribosome-recycling factor (185 aa).

This sequence belongs to the RRF family.

The protein resides in the cytoplasm. Functionally, responsible for the release of ribosomes from messenger RNA at the termination of protein biosynthesis. May increase the efficiency of translation by recycling ribosomes from one round of translation to another. This Haemophilus influenzae (strain 86-028NP) protein is Ribosome-recycling factor.